A 432-amino-acid chain; its full sequence is Enolase (432 aa).

Q166 lines the (2R)-2-phosphoglycerate pocket. Residue E210 is the Proton donor of the active site. Mg(2+) is bound by residues D247, E288, and D315. Residues K340, R369, S370, and K391 each contribute to the (2R)-2-phosphoglycerate site. Residue K340 is the Proton acceptor of the active site.

This sequence belongs to the enolase family. It depends on Mg(2+) as a cofactor.

Its subcellular location is the cytoplasm. The protein localises to the secreted. It is found in the cell surface. The catalysed reaction is (2R)-2-phosphoglycerate = phosphoenolpyruvate + H2O. It participates in carbohydrate degradation; glycolysis; pyruvate from D-glyceraldehyde 3-phosphate: step 4/5. Its function is as follows. Catalyzes the reversible conversion of 2-phosphoglycerate (2-PG) into phosphoenolpyruvate (PEP). It is essential for the degradation of carbohydrates via glycolysis. The protein is Enolase of Aeropyrum pernix (strain ATCC 700893 / DSM 11879 / JCM 9820 / NBRC 100138 / K1).